The following is a 351-amino-acid chain: uncharacterized protein (351 aa).

D215, D226, H290, E319, and E333 together coordinate Mn(2+).

Belongs to the peptidase M24B family. The cofactor is Mn(2+).

This is an uncharacterized protein from Staphylococcus epidermidis (strain ATCC 35984 / DSM 28319 / BCRC 17069 / CCUG 31568 / BM 3577 / RP62A).